Here is a 541-residue protein sequence, read N- to C-terminus: Calcium/calmodulin-dependent protein kinase kinase (541 aa).

The interval 83 to 106 (AVQEDDEAGPHSSNNLAATMSPNL) is disordered. A compositionally biased stretch (polar residues) spans 93–106 (HSSNNLAATMSPNL). The Protein kinase domain occupies 130–411 (YRLMEEIGQG…LHEVKVHTWV (282 aa)). ATP-binding positions include 136 to 144 (IGQGSYGIV) and lysine 159. The tract at residues 169-190 (NFACFRQPPPRRNKENAAPSVL) is RP domain. The Proton acceptor role is filled by aspartate 276. The segment at 437–442 (ENCVRV) is autoinhibitory domain. The tract at residues 440–465 (VRVIPRLDTLILVKAMGHRKRFGNPF) is calmodulin-binding. Positions 462 to 512 (GNPFRNKLSAQSSIRDRRKSSSVKDPTYVPPPNSPPATSNNNLNSTKVDRP) are disordered. The segment covering 497 to 507 (PATSNNNLNST) has biased composition (low complexity).

It belongs to the protein kinase superfamily. Ser/Thr protein kinase family. Requires Mg(2+) as cofactor. In terms of tissue distribution, expressed in head and tail neurons and vulval muscles.

It is found in the cytoplasm. The catalysed reaction is L-seryl-[protein] + ATP = O-phospho-L-seryl-[protein] + ADP + H(+). It carries out the reaction L-threonyl-[protein] + ATP = O-phospho-L-threonyl-[protein] + ADP + H(+). Its activity is regulated as follows. Activated by Ca(2+)/calmodulin. Binding of calmodulin may relieve intrasteric autoinhibition. In terms of biological role, calcium/calmodulin-dependent protein kinase which phosphorylates cmk-1. Component of a calcium-triggered signaling cascade involved in CRE-mediated transcriptional activation, probably through cmk-1-mediated crh-1/CREB phosphorylation. Plays a role in salt-avoidance learning behavior via the phosphorylation of cmk-1. The protein is Calcium/calmodulin-dependent protein kinase kinase of Caenorhabditis elegans.